Reading from the N-terminus, the 249-residue chain is Phosphate import ATP-binding protein PstB (249 aa).

The ABC transporter domain maps to 4–244 (IQTKDLNLYY…PKDKRTEDYI (241 aa)). 36 to 43 (GPSGCGKS) contacts ATP.

Belongs to the ABC transporter superfamily. Phosphate importer (TC 3.A.1.7) family. In terms of assembly, the complex is composed of two ATP-binding proteins (PstB), two transmembrane proteins (PstC and PstA) and a solute-binding protein (PstS).

The protein resides in the cell membrane. It carries out the reaction phosphate(out) + ATP + H2O = ADP + 2 phosphate(in) + H(+). Part of the ABC transporter complex PstSACB involved in phosphate import. Responsible for energy coupling to the transport system. The polypeptide is Phosphate import ATP-binding protein PstB (Clostridium acetobutylicum (strain ATCC 824 / DSM 792 / JCM 1419 / IAM 19013 / LMG 5710 / NBRC 13948 / NRRL B-527 / VKM B-1787 / 2291 / W)).